Here is a 275-residue protein sequence, read N- to C-terminus: MGIRFYRAHTPGTRNRSVSDFHEITTSTPTKSLTHANHRARGRNHSGSITTRWRGGGHKRLYRQIDFRRDKVGVLARVATVEYDPNRSARIALLHYQDGSKRYILHPQGLAIGAEVMSSPEAPISIGNALPLVNMPLGTEVHNIELRPYNGGQLVRAAGAVAQLVAKEGGFGTLRMPSGEVRLVAKDCWATVGQVGHVESINLTLGKAGRSRWLDRRPRVRGSVMNACDHPHGGGEGRCPIGHPGPLTPWGKPALGQRTRARKKYSDALLVRRRK.

The interval Thr-28–Trp-53 is disordered.

This sequence belongs to the universal ribosomal protein uL2 family. In terms of assembly, part of the 50S ribosomal subunit.

The protein localises to the plastid. The protein resides in the chloroplast. In Nephroselmis olivacea (Green alga), this protein is Large ribosomal subunit protein uL2c (rpl2).